Reading from the N-terminus, the 212-residue chain is Protein-L-isoaspartate O-methyltransferase (212 aa).

The active site involves serine 62.

Belongs to the methyltransferase superfamily. L-isoaspartyl/D-aspartyl protein methyltransferase family.

Its subcellular location is the cytoplasm. It catalyses the reaction [protein]-L-isoaspartate + S-adenosyl-L-methionine = [protein]-L-isoaspartate alpha-methyl ester + S-adenosyl-L-homocysteine. Its function is as follows. Catalyzes the methyl esterification of L-isoaspartyl residues in peptides and proteins that result from spontaneous decomposition of normal L-aspartyl and L-asparaginyl residues. It plays a role in the repair and/or degradation of damaged proteins. In Pseudoalteromonas translucida (strain TAC 125), this protein is Protein-L-isoaspartate O-methyltransferase.